The chain runs to 466 residues: Signal recognition particle 54 kDa protein (466 aa).

Residues 104-111 (GLQGSGKT), 184-188 (DTAGR), and 242-245 (TKLD) contribute to the GTP site. Residues 444–466 (MQQGGGGGGGGGGGLGGMGPFGD) form a disordered region. Over residues 446–466 (QGGGGGGGGGGGLGGMGPFGD) the composition is skewed to gly residues.

Belongs to the GTP-binding SRP family. SRP54 subfamily. In terms of assembly, part of the signal recognition particle protein translocation system, which is composed of SRP and FtsY. Archaeal SRP consists of a 7S RNA molecule of 300 nucleotides and two protein subunits: SRP54 and SRP19.

It localises to the cytoplasm. It carries out the reaction GTP + H2O = GDP + phosphate + H(+). Involved in targeting and insertion of nascent membrane proteins into the cytoplasmic membrane. Binds to the hydrophobic signal sequence of the ribosome-nascent chain (RNC) as it emerges from the ribosomes. The SRP-RNC complex is then targeted to the cytoplasmic membrane where it interacts with the SRP receptor FtsY. The protein is Signal recognition particle 54 kDa protein of Natronomonas pharaonis (strain ATCC 35678 / DSM 2160 / CIP 103997 / JCM 8858 / NBRC 14720 / NCIMB 2260 / Gabara) (Halobacterium pharaonis).